The following is a 277-amino-acid chain: MSLPEHSPLGKPSAYKTEYDATLLFPIARQPKRTEIGLPAGKPVPFFGVDIWNAYEVSWLNMRGKPQVALATFIIPSDTPNIIESKSFKLYLNSFNQTKIASPEALQQLLHHDLSEATGGTVQVRLVTEADLGKQKMGELEGLLLDRLDIEVDRYEPAPDLLKADQQESPVEETLVSHLLKSNCLVTGQPDWGSVQIRYVGAPINQEGLLKYLISFRNHNEFHEQCVERIFMDVMRECKPVKLAVYARYTRRGGLDINPFRTNFNTPWPDNLRNARQ.

83–85 (IES) contributes to the substrate binding site. 85–86 (SK) serves as a coordination point for NADPH. C184 serves as the catalytic Thioimide intermediate. The active-site Proton donor is D191. A substrate-binding site is contributed by 223–224 (HE). 252-253 (RG) contributes to the NADPH binding site.

The protein belongs to the GTP cyclohydrolase I family. QueF type 2 subfamily. Homodimer.

It localises to the cytoplasm. It carries out the reaction 7-aminomethyl-7-carbaguanine + 2 NADP(+) = 7-cyano-7-deazaguanine + 2 NADPH + 3 H(+). The protein operates within tRNA modification; tRNA-queuosine biosynthesis. In terms of biological role, catalyzes the NADPH-dependent reduction of 7-cyano-7-deazaguanine (preQ0) to 7-aminomethyl-7-deazaguanine (preQ1). This chain is NADPH-dependent 7-cyano-7-deazaguanine reductase, found in Cupriavidus pinatubonensis (strain JMP 134 / LMG 1197) (Cupriavidus necator (strain JMP 134)).